Reading from the N-terminus, the 43-residue chain is Thymosin beta-12 (43 aa).

2 stretches are compositionally biased toward basic and acidic residues: residues 1 to 25 (MSDKPDLAEVSNFDKTKLKKTETQE) and 33 to 43 (ETIEQEKQATA). The interval 1-43 (MSDKPDLAEVSNFDKTKLKKTETQEKNPLPTKETIEQEKQATA) is disordered. Residue S2 is modified to N-acetylserine.

This sequence belongs to the thymosin beta family.

It localises to the cytoplasm. The protein localises to the cytoskeleton. Its function is as follows. Plays an important role in the organization of the cytoskeleton. Binds to and sequesters actin monomers (G actin) and therefore inhibits actin polymerization. This Oncorhynchus mykiss (Rainbow trout) protein is Thymosin beta-12.